We begin with the raw amino-acid sequence, 207 residues long: LexA repressor (207 aa).

Positions 28 to 48 (RAEIARELGFRSANAAEEHLK) form a DNA-binding region, H-T-H motif. Catalysis depends on for autocatalytic cleavage activity residues serine 124 and lysine 161.

Belongs to the peptidase S24 family. In terms of assembly, homodimer.

The enzyme catalyses Hydrolysis of Ala-|-Gly bond in repressor LexA.. Represses a number of genes involved in the response to DNA damage (SOS response), including recA and lexA. In the presence of single-stranded DNA, RecA interacts with LexA causing an autocatalytic cleavage which disrupts the DNA-binding part of LexA, leading to derepression of the SOS regulon and eventually DNA repair. In Aliivibrio salmonicida (strain LFI1238) (Vibrio salmonicida (strain LFI1238)), this protein is LexA repressor.